Here is a 429-residue protein sequence, read N- to C-terminus: Ribosomal RNA small subunit methyltransferase B (429 aa).

S-adenosyl-L-methionine contacts are provided by residues 254–260, aspartate 277, aspartate 303, and aspartate 322; that span reads CAAPGGK. Residue cysteine 375 is the Nucleophile of the active site.

It belongs to the class I-like SAM-binding methyltransferase superfamily. RsmB/NOP family.

The protein resides in the cytoplasm. It carries out the reaction cytidine(967) in 16S rRNA + S-adenosyl-L-methionine = 5-methylcytidine(967) in 16S rRNA + S-adenosyl-L-homocysteine + H(+). Functionally, specifically methylates the cytosine at position 967 (m5C967) of 16S rRNA. The polypeptide is Ribosomal RNA small subunit methyltransferase B (Escherichia fergusonii (strain ATCC 35469 / DSM 13698 / CCUG 18766 / IAM 14443 / JCM 21226 / LMG 7866 / NBRC 102419 / NCTC 12128 / CDC 0568-73)).